We begin with the raw amino-acid sequence, 232 residues long: MTTAIVLDIEGTTSPTGAVREDLYGYTRARLPEWLARHRDDAAAPILAATRELAGRPDADTDEVARILREWLGSDVKAEPLKEAQGLICHEGFATGALHGEFFPDVPPALRAWHAAGHRLCVYSSGSLRNQRDWFAHARGGELGSLISAHFDLTTAGPKREAGSYRRIAEALGVEAGQLLFLSDHADELDAAVAAGWSAVGVHRPGEPNPPRPPHRWIGSFDELDLARTPVS.

This sequence belongs to the HAD-like hydrolase superfamily. MasA/MtnC family. As to quaternary structure, monomer. The cofactor is Mg(2+).

The catalysed reaction is 5-methylsulfanyl-2,3-dioxopentyl phosphate + H2O = 1,2-dihydroxy-5-(methylsulfanyl)pent-1-en-3-one + phosphate. The protein operates within amino-acid biosynthesis; L-methionine biosynthesis via salvage pathway; L-methionine from S-methyl-5-thio-alpha-D-ribose 1-phosphate: step 3/6. Its pathway is amino-acid biosynthesis; L-methionine biosynthesis via salvage pathway; L-methionine from S-methyl-5-thio-alpha-D-ribose 1-phosphate: step 4/6. Bifunctional enzyme that catalyzes the enolization of 2,3-diketo-5-methylthiopentyl-1-phosphate (DK-MTP-1-P) into the intermediate 2-hydroxy-3-keto-5-methylthiopentenyl-1-phosphate (HK-MTPenyl-1-P), which is then dephosphorylated to form the acireductone 1,2-dihydroxy-3-keto-5-methylthiopentene (DHK-MTPene). This is Enolase-phosphatase E1 from Nocardia farcinica (strain IFM 10152).